Here is a 233-residue protein sequence, read N- to C-terminus: Large ribosomal subunit protein uL1 (233 aa).

The protein belongs to the universal ribosomal protein uL1 family. As to quaternary structure, part of the 50S ribosomal subunit.

Binds directly to 23S rRNA. The L1 stalk is quite mobile in the ribosome, and is involved in E site tRNA release. In terms of biological role, protein L1 is also a translational repressor protein, it controls the translation of the L11 operon by binding to its mRNA. This chain is Large ribosomal subunit protein uL1, found in Geotalea daltonii (strain DSM 22248 / JCM 15807 / FRC-32) (Geobacter daltonii).